The primary structure comprises 892 residues: Gamma-tubulin small complex component GCP3 (892 aa).

It belongs to the TUBGCP family. Component of the gamma-tubulin small complex (gamma-TuSC) composed of tubulin gamma chain, gamma-tubulin complex protein 2 (GCP2) and gamma-tubulin complex protein 3 (GCP3). Interacts with tubulin gamma chain.

It is found in the cytoplasm. The protein localises to the cytoskeleton. The protein resides in the flagellum axoneme. It localises to the flagellum basal body. Component of the gamma-tubulin small complex (gamma-TuSC) involved in microtubule (MT) nucleation for the formation of median bodies and in the biogenesis of flagella. Gamma-TuSC may be required for the correct positioning of EB1 within the trophozoites. In Giardia intestinalis (strain ATCC 50803 / WB clone C6) (Giardia lamblia), this protein is Gamma-tubulin small complex component GCP3.